We begin with the raw amino-acid sequence, 257 residues long: Transmembrane protein 101 (257 aa).

8 helical membrane passes run 24-40, 52-72, 77-97, 110-130, 139-159, 182-202, 206-226, and 233-253; these read TRCP…LYAE, VPYL…MSFG, WFAL…YIGG, YSRT…AGEL, SLQS…AYSL, LFFV…YVTL, ILAV…SYWH, and FWNQ…AVIL.

It localises to the membrane. May activate NF-kappa-B signaling pathways. This is Transmembrane protein 101 (Tmem101) from Mus musculus (Mouse).